The sequence spans 218 residues: Cytochrome b6 (218 aa).

The chain crosses the membrane as a helical span at residues 35-55; sequence IFYCLGGITLVCFLIQFATGF. Heme c is bound at residue cysteine 38. Residues histidine 89 and histidine 103 each contribute to the heme b site. 3 helical membrane passes run 93-113, 119-139, and 189-209; these read ASMM…TGGF, LTWV…VTGY, and LHTF…FLMI. Residues histidine 190 and histidine 205 each contribute to the heme b site.

The protein belongs to the cytochrome b family. PetB subfamily. As to quaternary structure, the 4 large subunits of the cytochrome b6-f complex are cytochrome b6, subunit IV (17 kDa polypeptide, PetD), cytochrome f and the Rieske protein, while the 4 small subunits are PetG, PetL, PetM and PetN. The complex functions as a dimer. The cofactor is heme b. It depends on heme c as a cofactor.

It localises to the cellular thylakoid membrane. In terms of biological role, component of the cytochrome b6-f complex, which mediates electron transfer between photosystem II (PSII) and photosystem I (PSI), cyclic electron flow around PSI, and state transitions. The protein is Cytochrome b6 of Synechococcus sp. (strain CC9605).